Reading from the N-terminus, the 413-residue chain is Tyrosine--tRNA ligase (413 aa).

L-tyrosine is bound at residue Y34. The short motif at C39–N48 is the 'HIGH' region element. Y171 and Q175 together coordinate L-tyrosine. Residues K231–T235 carry the 'KMSKS' region motif. Residue K234 participates in ATP binding. The S4 RNA-binding domain maps to I346–I411.

The protein belongs to the class-I aminoacyl-tRNA synthetase family. TyrS type 1 subfamily. In terms of assembly, homodimer.

It is found in the cytoplasm. The enzyme catalyses tRNA(Tyr) + L-tyrosine + ATP = L-tyrosyl-tRNA(Tyr) + AMP + diphosphate + H(+). Catalyzes the attachment of tyrosine to tRNA(Tyr) in a two-step reaction: tyrosine is first activated by ATP to form Tyr-AMP and then transferred to the acceptor end of tRNA(Tyr). This is Tyrosine--tRNA ligase from Orientia tsutsugamushi (strain Ikeda) (Rickettsia tsutsugamushi).